The chain runs to 86 residues: Large ribosomal subunit protein bL31B (86 aa).

It belongs to the bacterial ribosomal protein bL31 family. Type B subfamily. As to quaternary structure, part of the 50S ribosomal subunit.

This is Large ribosomal subunit protein bL31B from Vibrio vulnificus (strain CMCP6).